We begin with the raw amino-acid sequence, 389 residues long: Maintenance of mitochondrial morphology protein 1-1 (389 aa).

The Lumenal segment spans residues 1–22 (MSQFVLPAVASEGIINWPFLTG). A helical transmembrane segment spans residues 23-43 (FMLGQFSVGLVLLIFVRFFIF). Residues 44–389 (SDQTEPDINT…YRSLQTSPRR (346 aa)) are Cytoplasmic-facing. The SMP-LTD domain maps to 83–278 (QPESLDWFSV…YPEYQQFELP (196 aa)). Disordered stretches follow at residues 283-345 (KTSA…PKFI) and 360-389 (FYEM…SPRR). A compositionally biased stretch (polar residues) spans 330–341 (MSMSSQRPNINN).

It belongs to the MMM1 family. In terms of assembly, homodimer. Component of the ER-mitochondria encounter structure (ERMES) or MDM complex, composed of MMM1, MDM10, MDM12 and MDM34. An MMM1 homodimer associates with one molecule of MDM12 on each side in a pairwise head-to-tail manner, and the SMP-LTD domains of MMM1 and MDM12 generate a continuous hydrophobic tunnel for phospholipid trafficking.

It localises to the endoplasmic reticulum membrane. Functionally, component of the ERMES/MDM complex, which serves as a molecular tether to connect the endoplasmic reticulum (ER) and mitochondria. Components of this complex are involved in the control of mitochondrial shape and protein biogenesis, and function in nonvesicular lipid trafficking between the ER and mitochondria. The MDM12-MMM11 subcomplex functions in the major beta-barrel assembly pathway that is responsible for biogenesis of all outer membrane beta-barrel proteins, and acts in a late step after the SAM complex. The MDM10-MDM12-MMM1 subcomplex further acts in the TOM40-specific pathway after the action of the MDM12-MMM1 complex. Essential for establishing and maintaining the structure of mitochondria and maintenance of mtDNA nucleoids. The polypeptide is Maintenance of mitochondrial morphology protein 1-1 (Yarrowia lipolytica (strain CLIB 122 / E 150) (Yeast)).